The primary structure comprises 243 residues: Mesoderm posterior protein 1 (243 aa).

Residues 1-86 are disordered; it reads MAQPLCEPRS…QRQSASEREK (86 aa). Positions 27–36 are enriched in polar residues; that stretch reads DGNSVCSPAW. Residues 76 to 130 form the bHLH domain; sequence GQRQSASEREKLRMRTLARALHELRRFLPPSVAPTGQNLTKIETLRLAIRYIGHL. The CPLCP signature appears at 153-157; the sequence is CPLCP. Positions 204-228 are disordered; that stretch reads AETASQERQEMEPSPSSPLFSSDML.

As to expression, no expression was detected in adult tissues except the testis. Expression in the testis was regulated developmentally; expressed 2 weeks after birth, and increases, reaching the full expression level in mature testes.

The protein resides in the nucleus. In terms of biological role, transcription factor. Plays a role in the epithelialization of somitic mesoderm and in the development of cardiac mesoderm. Defines the rostrocaudal patterning of the somites by participating in distinct Notch pathways. The polypeptide is Mesoderm posterior protein 1 (Mesp1) (Mus musculus (Mouse)).